An 85-amino-acid chain; its full sequence is Antitoxin VapB31 (85 aa).

Its function is as follows. Antitoxin component of a type II toxin-antitoxin (TA) system. Upon expression in M.smegmatis neutralizes the effect of cognate toxin VapC31. This Mycobacterium tuberculosis (strain ATCC 25618 / H37Rv) protein is Antitoxin VapB31 (vapB31).